Consider the following 248-residue polypeptide: DNA repair protein RecO (248 aa).

Belongs to the RecO family.

Its function is as follows. Involved in DNA repair and RecF pathway recombination. The protein is DNA repair protein RecO of Bradyrhizobium sp. (strain BTAi1 / ATCC BAA-1182).